Consider the following 75-residue polypeptide: Protease B inhibitor 1 (75 aa).

Thr74 carries the post-translational modification Phosphothreonine.

This sequence belongs to the protease inhibitor I9 family. Part of the heterodimeric LMA1 complex together with the thioredoxin II/TRX2. LMA1 binds to the ATPase SEC18.

It localises to the cytoplasm. The protein localises to the nucleus. In terms of biological role, cytosolic inhibitor of vacuolar proteinase B (yscB), probably regulating protease B activity during limited proteolysis. PBI2 is a component of the LMA1 complex, which is involved in the facilitation of vesicle fusion such as homotypic vacuole and ER-derived COPII vesicle fusion with the Golgi. This chain is Protease B inhibitor 1 (PBI2), found in Saccharomyces cerevisiae (Baker's yeast).